Reading from the N-terminus, the 105-residue chain is uncharacterized protein (105 aa).

A disordered region spans residues 80–105 (TGGPTSSTCTRRSDLATGRGSDRRPD).

This is an uncharacterized protein from Micromonospora rosea.